The following is a 358-amino-acid chain: NADH-quinone oxidoreductase subunit H (358 aa).

8 consecutive transmembrane segments (helical) span residues 29 to 49 (LIKI…LTLW), 95 to 115 (GLFY…WAVI), 130 to 150 (LLLV…AGWA), 176 to 196 (FCFL…IVAV), 206 to 226 (GLGF…VYLI), 258 to 280 (GFAI…AVVM), 297 to 317 (GWIW…WIRA), and 334 to 354 (IFIP…LSPW).

It belongs to the complex I subunit 1 family. In terms of assembly, NDH-1 is composed of 14 different subunits. Subunits NuoA, H, J, K, L, M, N constitute the membrane sector of the complex.

The protein localises to the cell inner membrane. The catalysed reaction is a quinone + NADH + 5 H(+)(in) = a quinol + NAD(+) + 4 H(+)(out). NDH-1 shuttles electrons from NADH, via FMN and iron-sulfur (Fe-S) centers, to quinones in the respiratory chain. The immediate electron acceptor for the enzyme in this species is believed to be ubiquinone. Couples the redox reaction to proton translocation (for every two electrons transferred, four hydrogen ions are translocated across the cytoplasmic membrane), and thus conserves the redox energy in a proton gradient. This subunit may bind ubiquinone. The protein is NADH-quinone oxidoreductase subunit H of Acidovorax sp. (strain JS42).